Consider the following 629-residue polypeptide: tRNA uridine 5-carboxymethylaminomethyl modification enzyme MnmG (629 aa).

FAD-binding positions include 13 to 18 (GGGHAG), Val-125, and Ser-180. An NAD(+)-binding site is contributed by 273 to 287 (GPRYCPSIEDKVMRF). Gln-370 contacts FAD.

The protein belongs to the MnmG family. In terms of assembly, homodimer. Heterotetramer of two MnmE and two MnmG subunits. FAD serves as cofactor.

Its subcellular location is the cytoplasm. NAD-binding protein involved in the addition of a carboxymethylaminomethyl (cmnm) group at the wobble position (U34) of certain tRNAs, forming tRNA-cmnm(5)s(2)U34. The sequence is that of tRNA uridine 5-carboxymethylaminomethyl modification enzyme MnmG from Salmonella agona (strain SL483).